A 428-amino-acid chain; its full sequence is Cell division protein FtsZ (428 aa).

GTP-binding positions include 73-77 (GGGGN), 160-162 (GTG), E191, R195, and D239. Residues 378-428 (NAANARVVSAPPKRTPTQTPLTNSPAPTPEPKEKSGLDIPDFLQRRRPPKN) form a disordered region. Over residues 392 to 402 (TPTQTPLTNSP) the composition is skewed to polar residues.

The protein belongs to the FtsZ family. Homodimer. Polymerizes to form a dynamic ring structure in a strictly GTP-dependent manner. Interacts directly with several other division proteins.

The protein localises to the cytoplasm. Its function is as follows. Essential cell division protein that forms a contractile ring structure (Z ring) at the future cell division site. The regulation of the ring assembly controls the timing and the location of cell division. One of the functions of the FtsZ ring is to recruit other cell division proteins to the septum to produce a new cell wall between the dividing cells. Binds GTP and shows GTPase activity. This chain is Cell division protein FtsZ, found in Nostoc sp. (strain PCC 7120 / SAG 25.82 / UTEX 2576).